A 1661-amino-acid chain; its full sequence is ATP-dependent bile acid permease (1661 aa).

Over 1-33 (MHHVLNSTRPDHRFWFYDDVTQYGRTKYLNYYT) the chain is Lumenal. An N-linked (GlcNAc...) asparagine glycan is attached at N6. The helical transmembrane segment at 34–54 (PLVLLIFTVLFITYNIWKHYY) threads the bilayer. Residues 55–74 (YYDVLHLKQKNPIDELLYSS) lie on the Cytoplasmic side of the membrane. The helical transmembrane segment at 75–95 (TDEDEQSPLINNNTITTNYVD) threads the bilayer. Residues 96-133 (NNCTKDALKNRHFSLEKLKSVKVNGEPHGTPEIVRRGF) lie on the Lumenal side of the membrane. N97 is a glycosylation site (N-linked (GlcNAc...) asparagine). A helical membrane pass occupies residues 134–154 (IEKSRIILEFFLVLSQVIIHS). Over 155–166 (FILLHYVNKNPE) the chain is Cytoplasmic. A helical membrane pass occupies residues 167–187 (FTQQGTITGLVEWCALFIIVS). At 188–205 (LRLANVNQNFKFINKYPG) the chain is on the lumenal side. Residues 206 to 226 (NLWSVSFINYLALFISMILPF) form a helical membrane-spanning segment. Residues 227 to 345 (RSIFIHHINS…VKRKRIFSLN (119 aa)) are Cytoplasmic-facing. The chain crosses the membrane as a helical span at residues 346–366 (LFFFFSNYLVLQCFWAFLGSV). In terms of domain architecture, ABC transmembrane type-1 1 spans 354-662 (LVLQCFWAFL…LSDMLSFVVQ (309 aa)). Topologically, residues 367–393 (LSFIPTVLLKRILEYVEDQSSAPSNLA) are lumenal. The chain crosses the membrane as a helical span at residues 394-414 (WFYVTVMFVGRILVAICQAQA). At 415–495 (LFFGRRVCIR…AFKVSEICGY (81 aa)) the chain is on the cytoplasmic side. The interval 445–468 (NKTKPSNEDPQEINDQKSINGDEE) is disordered. Residues 496–516 (LHSFLEAFVMTVVALALLYRL) traverse the membrane as a helical segment. Topologically, residues 517-519 (LGF) are lumenal. A helical transmembrane segment spans residues 520 to 540 (AAIVGVLIIVAMLPLNYKLAK). Residues 541–602 (YIGDLQKKNL…LLLMRSIVWS (62 aa)) lie on the Cytoplasmic side of the membrane. A helical membrane pass occupies residues 603 to 623 (ISSFLWFVTPTIVTAASFAYY). At 624-644 (IYVQGEVLTTPVAFTALSLFT) the chain is on the lumenal side. A helical transmembrane segment spans residues 645–665 (LLRDPLDRLSDMLSFVVQSKV). At 666-1053 (SLDRVQDFLN…SWWVRAWASH (388 aa)) the chain is on the cytoplasmic side. The ABC transporter 1 domain occupies 694-935 (FAFENSTISW…GLFGEDELVK (242 aa)). 729 to 736 (GPTGSGKT) serves as a coordination point for ATP. Phosphoserine occurs at positions 936, 940, and 955. The 320-residue stretch at 1026–1345 (VSFLASLFLI…LVRLYSEVEM (320 aa)) folds into the ABC transmembrane type-1 2 domain. Residues 1054 to 1074 (NVIAKIIPRAQRAIAFISKKA) traverse the membrane as a helical segment. Over 1075–1114 (SHLIDWRGSSQISMASAENQPSSGHSTMYYLVLYLIIGFA) the chain is Lumenal. The chain crosses the membrane as a helical span at residues 1115–1135 (QALLGAGKTILNFVAGINASR). At 1136-1178 (KIFNMILNKVLHSKIRFFDATPTGRIMNRFSKDIEAIDQELTP) the chain is on the cytoplasmic side. A helical transmembrane segment spans residues 1179–1199 (YIQGAFYSLIECLSTVILITF). Residue I1200 is a topological domain, lumenal. A helical membrane pass occupies residues 1201–1221 (TPQFLSVAIVVSILYYFVGYF). Residues 1222 to 1292 (YMAGSRELKR…VANRWLAFRI (71 aa)) lie on the Cytoplasmic side of the membrane. A helical transmembrane segment spans residues 1293–1313 (DMIGSLVIFGAGLFILFNINN). The Lumenal segment spans residues 1314-1315 (LD). Residues 1316–1336 (SGMAGISLTYAISFTEGALWL) form a helical membrane-spanning segment. Residues 1337–1661 (VRLYSEVEMN…FVEKLNSKKD (325 aa)) lie on the Cytoplasmic side of the membrane. The 256-residue stretch at 1381–1636 (IEVNDLSLRY…KQSAFYSMCE (256 aa)) folds into the ABC transporter 2 domain. Residue 1415–1422 (GRTGAGKS) participates in ATP binding.

This sequence belongs to the ABC transporter superfamily. ABCC family. Conjugate transporter (TC 3.A.1.208) subfamily.

The protein localises to the vacuole membrane. Vacuolar class C ABC transporter which regulates the translocation of phosphatidylcholine to the vacuole lumen, the release of lumenal calcium stores, and acts as a negative regulator of vacuole fusion. Exhibits ATP-dependent bile acid transport. This Saccharomyces cerevisiae (strain ATCC 204508 / S288c) (Baker's yeast) protein is ATP-dependent bile acid permease (YBT1).